A 349-amino-acid chain; its full sequence is Phosphoribosylformylglycinamidine cyclo-ligase (349 aa).

This sequence belongs to the AIR synthase family.

It localises to the cytoplasm. It catalyses the reaction 2-formamido-N(1)-(5-O-phospho-beta-D-ribosyl)acetamidine + ATP = 5-amino-1-(5-phospho-beta-D-ribosyl)imidazole + ADP + phosphate + H(+). It participates in purine metabolism; IMP biosynthesis via de novo pathway; 5-amino-1-(5-phospho-D-ribosyl)imidazole from N(2)-formyl-N(1)-(5-phospho-D-ribosyl)glycinamide: step 2/2. The protein is Phosphoribosylformylglycinamidine cyclo-ligase of Lactobacillus helveticus (strain DPC 4571).